A 315-amino-acid chain; its full sequence is Porphobilinogen deaminase (315 aa).

An S-(dipyrrolylmethanemethyl)cysteine modification is found at Cys-245.

It belongs to the HMBS family. In terms of assembly, monomer. The cofactor is dipyrromethane.

The catalysed reaction is 4 porphobilinogen + H2O = hydroxymethylbilane + 4 NH4(+). Its pathway is porphyrin-containing compound metabolism; protoporphyrin-IX biosynthesis; coproporphyrinogen-III from 5-aminolevulinate: step 2/4. It participates in porphyrin-containing compound metabolism; chlorophyll biosynthesis. Functionally, tetrapolymerization of the monopyrrole PBG into the hydroxymethylbilane pre-uroporphyrinogen in several discrete steps. The chain is Porphobilinogen deaminase from Prochlorococcus marinus (strain NATL2A).